The chain runs to 554 residues: Wee1-like protein kinase 2-B (554 aa).

Disordered regions lie at residues 1 to 86 (MRMA…GGEC) and 145 to 182 (TLVN…DSQM). Residue serine 38 is modified to Phosphoserine. Polar residues-rich tracts occupy residues 38–48 (SPVSSWRTNNC) and 147–163 (VNVN…THFQ). The Protein kinase domain occupies 213 to 487 (FLEIEKIGAG…AKNSVLRRCV (275 aa)). ATP contacts are provided by residues 219 to 227 (IGAGEFGSV) and lysine 242. Aspartate 340 (proton acceptor) is an active-site residue. Residues asparagine 345 and aspartate 377 each contribute to the Mg(2+) site. Residues 490 to 516 (AAELQKQLNVEKFKTAMLERELQAAKL) are a coiled coil.

This sequence belongs to the protein kinase superfamily. Ser/Thr protein kinase family. WEE1 subfamily. As to quaternary structure, interacts with cdca3. Ubiquitinated and degraded at the onset of G2/M phase. In terms of processing, phosphorylated during M and G1 phases. Interacts with cdca3 when phosphorylated at Ser-38.

It is found in the nucleus. The enzyme catalyses L-tyrosyl-[protein] + ATP = O-phospho-L-tyrosyl-[protein] + ADP + H(+). Its function is as follows. Oocyte and early embryo-specific protein tyrosine kinase that phosphorylates and inhibits cdk1 and acts as a regulator of meiosis in oocytes. Required to ensure the meiotic cell cycle in oocytes by phosphorylating cdk1 at 'Tyr-15', leading to inhibit cdk1 activity and prevent meiosis. This chain is Wee1-like protein kinase 2-B (wee2-b), found in Xenopus laevis (African clawed frog).